A 145-amino-acid polypeptide reads, in one-letter code: MVAFSDKQEGLVNGAYEAFKADIPKYSVVFYTTILEKAPAAKNLFSFLANGVDATNPKLTGHAEKLFGLVRDSAAQLRASGGVVADAALGAVHSQKAVNDAQFVVVKEALVKTLKEAVGDKWSDELGTAVELAYDELAAAIKKAY.

Residues 3–145 (AFSDKQEGLV…ELAAAIKKAY (143 aa)) form the Globin domain. Tyr-26 and Tyr-31 each carry nitrated tyrosine. Ser-46 is a binding site for heme b. Ser-46 bears the Phosphoserine mark. Residue His-62 participates in O2 binding. Heme b contacts are provided by Lys-65, His-93, and Lys-96. Tyr-134 bears the Nitrated tyrosine mark.

Belongs to the plant globin family. As to quaternary structure, monomer. Nitrated in effective nodules and particularly in hypoxic conditions; this mechanism may play a protective role in the symbiosis by buffering toxic peroxynitrite NO(2)(-). Nitration level decrease during nodule senescence. Post-translationally, phosphorylation at Ser-46 disrupts the molecular environment of its porphyrin ring oxygen binding pocket, thus leading to a reduced oxygen consumption and to the delivery of oxygen O(2) to symbiosomes. In terms of tissue distribution, root nodules.

The protein localises to the cytoplasm. The protein resides in the cytosol. It is found in the nucleus. Functionally, leghemoglobin that reversibly binds oxygen O(2) through a pentacoordinated heme iron. In root nodules, facilitates the diffusion of oxygen to the bacteroids while preventing the bacterial nitrogenase from being inactivated by buffering dioxygen, nitric oxide and carbon monoxide, and promoting the formation of reactive oxygen species (ROS, e.g. H(2)O(2)). This role is essential for symbiotic nitrogen fixation (SNF). The protein is Leghemoglobin-2 of Vigna unguiculata (Cowpea).